We begin with the raw amino-acid sequence, 591 residues long: ATP-dependent lipid A-core flippase (591 aa).

The next 5 membrane-spanning stretches (helical) occupy residues 34–54 (LILA…LAVI), 71–91 (IWSV…CNFF), 158–178 (LVVI…TVII), 258–278 (LTPL…AVAL), and 285–305 (TLTA…FDPI). The 283-residue stretch at 35–317 (ILAVLLMAGA…LTNLASKMQK (283 aa)) folds into the ABC transmembrane type-1 domain. The 237-residue stretch at 350–586 (IEFRQIGHRF…GGLYATLYNM (237 aa)) folds into the ABC transporter domain. Residue 384-391 (GRSGSGKT) participates in ATP binding.

It belongs to the ABC transporter superfamily. Lipid exporter (TC 3.A.1.106) family. In terms of assembly, homodimer.

It is found in the cell inner membrane. The catalysed reaction is ATP + H2O + lipid A-core oligosaccharideSide 1 = ADP + phosphate + lipid A-core oligosaccharideSide 2.. In terms of biological role, involved in lipopolysaccharide (LPS) biosynthesis. Translocates lipid A-core from the inner to the outer leaflet of the inner membrane. Transmembrane domains (TMD) form a pore in the inner membrane and the ATP-binding domain (NBD) is responsible for energy generation. The protein is ATP-dependent lipid A-core flippase of Bordetella avium (strain 197N).